The following is a 505-amino-acid chain: MNDLMLDKSALLFGVSKYLEKGIITGNVLIHKSLLAELERESNDGLVSAEIALDEVKKLKDITERILVNFEIVGDDSKKGEANELSREYCLEKGCIIVTADETQKKICDAMGIQYNFLQPLKQGLSFESFFDDETMSLHIKEDTVPRAKKGKPGNWKFVNLSDKPMLSTDVRMIANEIINAVRLIKGSFVEIERRGSLIIQLGNYRVVITRPPLSDGWEITITRPVVRKRLEDYNLDERLIKRLEERAEGIIIAGAPGMGKTTFAQALAEYYMRLGKIVKTIESPRDMHLPPEITQYSKNYAEIGELHDILLLSRPDYTVYDEMRNDEDFKLYVDLRLAGVGMVGVVHATSPIDAIHRFVNRVDIGTIPNILDTIIFINSGNVSKVYTLEMTVKVPAGLKEADLARPVVEIKDLATGNTEYEIYVFGEQTMIVPVNRGITMSNMEFKISKIVNNIIPNATVKYEDGEYVIVIPKEEIGKYNRKLVQRLKRLEKKNNIKIKIKLSD.

The 105-residue stretch at 2-106 (NDLMLDKSAL…IVTADETQKK (105 aa)) folds into the PINc domain. The segment at 434 to 505 (PVNRGITMSN…NIKIKIKLSD (72 aa)) is KH domain. The required for maximum interaction with Hjc and Hjm stretch occupies residues 493 to 505 (KKNNIKIKIKLSD).

Homohexamer; the central pore (25-31 Angstroms) is large enough to hold dsDNA. In PDB:5F4H two of the 6 subunits are in an ATP-binding competent conformation. Interacts with Holliday junction resolvase Hjc; in the presence of HJ DNA this interaction decreases branch migration but not Y-DNA unwinding. Interacts with helicase Hjm (hel308) which decreases the DNA helicase activity of Hjm. Ca(2+) is required as a cofactor.

It catalyses the reaction ATP + H2O = ADP + phosphate + H(+). Promotes Holliday junction (HJ) branch migration and unwinds Y-shaped DNA (but not replication forks or dsDNA) in an ATP hydrolysis-dependent manner. Stimulates cleavage by HJ resolvase Hjc. Unwinds Y-shaped and 3'-flap DNA substrates. In the absence of other proteins stabilizes replication forks (prevents spontaneous unwinding); Hjc, Hjm (Hel308) and PINA coordinate HJ migration and cleavage of replication forks in a coordinated way. Inhibits the 5'-3' (but not 3'-5') helicase activity of helicase Hjm (Hel308) on overhang DNA. Probably acts as an ATP-dependent pump that pulls DNA through the hexamer. The chain is Holliday junction branch migration ATPase PINA from Saccharolobus islandicus (strain REY15A) (Sulfolobus islandicus).